The following is a 262-amino-acid chain: Thiazole synthase (262 aa).

The active-site Schiff-base intermediate with DXP is Lys-105. 1-deoxy-D-xylulose 5-phosphate is bound by residues Gly-166, 192-193 (AG), and 214-215 (NT).

Belongs to the ThiG family. Homotetramer. Forms heterodimers with either ThiH or ThiS.

The protein localises to the cytoplasm. It carries out the reaction [ThiS sulfur-carrier protein]-C-terminal-Gly-aminoethanethioate + 2-iminoacetate + 1-deoxy-D-xylulose 5-phosphate = [ThiS sulfur-carrier protein]-C-terminal Gly-Gly + 2-[(2R,5Z)-2-carboxy-4-methylthiazol-5(2H)-ylidene]ethyl phosphate + 2 H2O + H(+). It participates in cofactor biosynthesis; thiamine diphosphate biosynthesis. In terms of biological role, catalyzes the rearrangement of 1-deoxy-D-xylulose 5-phosphate (DXP) to produce the thiazole phosphate moiety of thiamine. Sulfur is provided by the thiocarboxylate moiety of the carrier protein ThiS. In vitro, sulfur can be provided by H(2)S. The protein is Thiazole synthase of Phenylobacterium zucineum (strain HLK1).